Here is a 450-residue protein sequence, read N- to C-terminus: Tubulin alpha-1 chain (450 aa).

The GTP site is built by Gln11, Glu71, Gly144, Thr145, Thr179, Asn206, and Asn228. Residue Glu71 coordinates Mg(2+). The active site involves Glu254.

The protein belongs to the tubulin family. In terms of assembly, dimer of alpha and beta chains. A typical microtubule is a hollow water-filled tube with an outer diameter of 25 nm and an inner diameter of 15 nM. Alpha-beta heterodimers associate head-to-tail to form protofilaments running lengthwise along the microtubule wall with the beta-tubulin subunit facing the microtubule plus end conferring a structural polarity. Microtubules usually have 13 protofilaments but different protofilament numbers can be found in some organisms and specialized cells. It depends on Mg(2+) as a cofactor. Post-translationally, undergoes a tyrosination/detyrosination cycle, the cyclic removal and re-addition of a C-terminal tyrosine residue by the enzymes tubulin tyrosine carboxypeptidase (TTCP) and tubulin tyrosine ligase (TTL), respectively.

Its subcellular location is the cytoplasm. It is found in the cytoskeleton. It carries out the reaction GTP + H2O = GDP + phosphate + H(+). In terms of biological role, tubulin is the major constituent of microtubules, a cylinder consisting of laterally associated linear protofilaments composed of alpha- and beta-tubulin heterodimers. Microtubules grow by the addition of GTP-tubulin dimers to the microtubule end, where a stabilizing cap forms. Below the cap, tubulin dimers are in GDP-bound state, owing to GTPase activity of alpha-tubulin. This chain is Tubulin alpha-1 chain (TUBA1), found in Oryza sativa subsp. japonica (Rice).